A 506-amino-acid polypeptide reads, in one-letter code: Probable Xaa-Pro aminopeptidase BDBG_08406 (506 aa).

Mn(2+)-binding residues include Asp-285, Asp-296, Glu-433, and Glu-471.

This sequence belongs to the peptidase M24B family. Mn(2+) is required as a cofactor.

It catalyses the reaction Release of any N-terminal amino acid, including proline, that is linked to proline, even from a dipeptide or tripeptide.. In terms of biological role, catalyzes the removal of a penultimate prolyl residue from the N-termini of peptides. This Blastomyces gilchristii (strain SLH14081) (Blastomyces dermatitidis) protein is Probable Xaa-Pro aminopeptidase BDBG_08406.